Reading from the N-terminus, the 65-residue chain is Large ribosomal subunit protein bL35 (65 aa).

The protein belongs to the bacterial ribosomal protein bL35 family.

This chain is Large ribosomal subunit protein bL35, found in Thermotoga petrophila (strain ATCC BAA-488 / DSM 13995 / JCM 10881 / RKU-1).